The sequence spans 416 residues: Peptide chain release factor subunit 1 (416 aa).

This sequence belongs to the eukaryotic release factor 1 family. In terms of assembly, heterodimer of two subunits, one of which binds GTP.

Its subcellular location is the cytoplasm. Functionally, directs the termination of nascent peptide synthesis (translation) in response to the termination codons UAA, UAG and UGA. This chain is Peptide chain release factor subunit 1, found in Haloquadratum walsbyi (strain DSM 16790 / HBSQ001).